The following is a 570-amino-acid chain: Glucan 1,3-beta-glucosidase 2 (570 aa).

Asparagine 91, asparagine 116, asparagine 121, asparagine 184, asparagine 203, and asparagine 248 each carry an N-linked (GlcNAc...) asparagine glycan. Glutamate 338 functions as the Proton donor in the catalytic mechanism. Asparagine 364 carries an N-linked (GlcNAc...) asparagine glycan. The active-site Nucleophile is the glutamate 439. Asparagine 525 and asparagine 552 each carry an N-linked (GlcNAc...) asparagine glycan.

This sequence belongs to the glycosyl hydrolase 5 (cellulase A) family.

The protein resides in the secreted. The catalysed reaction is Successive hydrolysis of beta-D-glucose units from the non-reducing ends of (1-&gt;3)-beta-D-glucans, releasing alpha-glucose.. The sequence is that of Glucan 1,3-beta-glucosidase 2 (exg2) from Schizosaccharomyces pombe (strain 972 / ATCC 24843) (Fission yeast).